The sequence spans 735 residues: Trafficking protein particle complex subunit 12 (735 aa).

Disordered stretches follow at residues 1–204 (MEDA…QPSP) and 237–276 (NPGA…PPAS). Residues 13–22 (PEAPHPPQLA) are compositionally biased toward pro residues. Residues 34–50 (ETIDLGGDEFGSEENET) are compositionally biased toward acidic residues. Phosphoserine occurs at positions 109 and 184. TPR repeat units follow at residues 545–578 (GRVM…YPEQ), 580–613 (PQLL…TQKL), 620–653 (IMVL…DPRN), and 654–687 (AVAN…DPRH).

Component of the multisubunit TRAPP (transport protein particle) complex, which includes at least TRAPPC2, TRAPPC2L, TRAPPC3, TRAPPC3L, TRAPPC4, TRAPPC5, TRAPPC8, TRAPPC9, TRAPPC10, TRAPPC11 and TRAPPC12. Interacts with CENPE. In terms of processing, phosphorylated as the cells enter mitosis but is dephosphorylated at or before the onset of anaphase. The phosphorylated form recruits CENPE to kinetochores more efficiently than the non-phosphorylated form.

The protein localises to the endoplasmic reticulum-Golgi intermediate compartment. Its subcellular location is the nucleus. Its function is as follows. Component of the TRAPP complex, which is involved in endoplasmic reticulum to Golgi apparatus trafficking at a very early stage. Also plays a role in chromosome congression, kinetochore assembly and stability and controls the recruitment of CENPE to the kinetochores. This chain is Trafficking protein particle complex subunit 12, found in Homo sapiens (Human).